Here is a 151-residue protein sequence, read N- to C-terminus: Small ribosomal subunit protein uS15y (151 aa).

This sequence belongs to the universal ribosomal protein uS15 family.

The sequence is that of Small ribosomal subunit protein uS15y from Oryza sativa subsp. japonica (Rice).